We begin with the raw amino-acid sequence, 329 residues long: Probable ABC transporter permease protein MG188 homolog (329 aa).

Transmembrane regions (helical) follow at residues 30-50 (FLLFCPALLTTFLFTLVPFFL), 96-116 (IISLPLTIVLAIIISSAIVFV), 128-148 (VFFLPYVTSGVAVSIAFIYIL), 176-196 (ALWGILIFGIWKNMAFNVLVI), 234-254 (LIFLLTLLILGGMQVFPISLF), and 283-303 (NFAGAATLVLFILGVCYGLVL). The 216-residue stretch at 88-303 (LRNSFLYSII…ILGVCYGLVL (216 aa)) folds into the ABC transmembrane type-1 domain.

It belongs to the binding-protein-dependent transport system permease family. MalFG subfamily.

Its subcellular location is the cell membrane. Its function is as follows. Probably part of a binding-protein-dependent transport system. Probably responsible for the translocation of the substrate across the membrane. The polypeptide is Probable ABC transporter permease protein MG188 homolog (Mycoplasma pneumoniae (strain ATCC 29342 / M129 / Subtype 1) (Mycoplasmoides pneumoniae)).